The sequence spans 521 residues: Glucose-6-phosphate isomerase (521 aa).

Glutamate 327 functions as the Proton donor in the catalytic mechanism. Active-site residues include histidine 358 and lysine 486.

Belongs to the GPI family.

It localises to the cytoplasm. The catalysed reaction is alpha-D-glucose 6-phosphate = beta-D-fructose 6-phosphate. The protein operates within carbohydrate biosynthesis; gluconeogenesis. It functions in the pathway carbohydrate degradation; glycolysis; D-glyceraldehyde 3-phosphate and glycerone phosphate from D-glucose: step 2/4. Its function is as follows. Catalyzes the reversible isomerization of glucose-6-phosphate to fructose-6-phosphate. The polypeptide is Glucose-6-phosphate isomerase (Bordetella petrii (strain ATCC BAA-461 / DSM 12804 / CCUG 43448)).